The sequence spans 291 residues: Sulfate transport system permease protein CysW (291 aa).

Over 1-22 (MAEVTQLKRYDARPINWGKWFL) the chain is Cytoplasmic. The chain crosses the membrane as a helical span at residues 23 to 43 (IGIGMLVSAFILLVPMIYIFV). Over 44 to 69 (QAFSKGLMPVLQNLADPDMLHAIWLT) the chain is Periplasmic. Residues 66-270 (IWLTVMIALI…MAIITLFLKS (205 aa)) form the ABC transmembrane type-1 domain. Residues 70–90 (VMIALIAVPVNLVFGILLAWL) traverse the membrane as a helical segment. The Cytoplasmic segment spans residues 91–104 (VTRFNFPGRQLLLT). Residues 105 to 125 (LLDIPFAVSPVVAGLVYLLFY) traverse the membrane as a helical segment. Topologically, residues 126-141 (GSNGPLGGWLDEHNLQ) are periplasmic. The helical transmembrane segment at 142-162 (IMFSWPGMVLVTIFVTCPFVV) threads the bilayer. Topologically, residues 163-200 (RELVPVMLSQGSQEDEAAILLGASGWQMFRRVTLPNIR) are cytoplasmic. The helical transmembrane segment at 201-221 (WALLYGVVLTNARAIGEFGAV) threads the bilayer. Over 222-247 (SVVSGSIRGETLSLPLQIELLEQDYN) the chain is Periplasmic. A helical membrane pass occupies residues 248 to 268 (TVGSFTAAALLTLMAIITLFL). At 269–291 (KSMLQWRLENQEKRAQQEEHHEH) the chain is on the cytoplasmic side.

This sequence belongs to the binding-protein-dependent transport system permease family. CysTW subfamily. As to quaternary structure, the complex is composed of two ATP-binding proteins (CysA), two transmembrane proteins (CysT and CysW) and a solute-binding protein (CysP).

It is found in the cell inner membrane. Part of the ABC transporter complex CysAWTP (TC 3.A.1.6.1) involved in sulfate/thiosulfate import. Probably responsible for the translocation of the substrate across the membrane. The polypeptide is Sulfate transport system permease protein CysW (cysW) (Escherichia coli O6:H1 (strain CFT073 / ATCC 700928 / UPEC)).